We begin with the raw amino-acid sequence, 214 residues long: Probable nicotinate-nucleotide adenylyltransferase (214 aa).

The protein belongs to the NadD family.

The catalysed reaction is nicotinate beta-D-ribonucleotide + ATP + H(+) = deamido-NAD(+) + diphosphate. The protein operates within cofactor biosynthesis; NAD(+) biosynthesis; deamido-NAD(+) from nicotinate D-ribonucleotide: step 1/1. Its function is as follows. Catalyzes the reversible adenylation of nicotinate mononucleotide (NaMN) to nicotinic acid adenine dinucleotide (NaAD). The sequence is that of Probable nicotinate-nucleotide adenylyltransferase from Buchnera aphidicola subsp. Acyrthosiphon pisum (strain Tuc7).